Here is a 519-residue protein sequence, read N- to C-terminus: Exodeoxyribonuclease 7 large subunit (519 aa).

The protein belongs to the XseA family. As to quaternary structure, heterooligomer composed of large and small subunits.

It is found in the cytoplasm. The enzyme catalyses Exonucleolytic cleavage in either 5'- to 3'- or 3'- to 5'-direction to yield nucleoside 5'-phosphates.. Functionally, bidirectionally degrades single-stranded DNA into large acid-insoluble oligonucleotides, which are then degraded further into small acid-soluble oligonucleotides. The polypeptide is Exodeoxyribonuclease 7 large subunit (Cereibacter sphaeroides (strain ATCC 17025 / ATH 2.4.3) (Rhodobacter sphaeroides)).